Reading from the N-terminus, the 329-residue chain is GTPase Obg (329 aa).

The 159-residue stretch at 1 to 159 folds into the Obg domain; the sequence is MQFIDQARIT…WLLHLELKLL (159 aa). The 169-residue stretch at 160–328 folds into the OBG-type G domain; sequence AEVGIIGLPN…LLNKIWSKLE (169 aa). Residues 166 to 173, 191 to 195, 213 to 216, 280 to 283, and 309 to 311 contribute to the ATP site; these read GLPNAGKS, FTTLI, DIPG, NKKE, and SAI. Residues S173 and T193 each contribute to the Mg(2+) site.

Belongs to the TRAFAC class OBG-HflX-like GTPase superfamily. OBG GTPase family. In terms of assembly, monomer. The cofactor is Mg(2+).

It is found in the cytoplasm. Functionally, an essential GTPase which binds GTP, GDP and possibly (p)ppGpp with moderate affinity, with high nucleotide exchange rates and a fairly low GTP hydrolysis rate. Plays a role in control of the cell cycle, stress response, ribosome biogenesis and in those bacteria that undergo differentiation, in morphogenesis control. The polypeptide is GTPase Obg (Prochlorococcus marinus (strain SARG / CCMP1375 / SS120)).